The primary structure comprises 166 residues: 6,7-dimethyl-8-ribityllumazine synthase (166 aa).

5-amino-6-(D-ribitylamino)uracil-binding positions include Phe-24, 58–60 (ALE), and 82–84 (AVV). 87–88 (ET) is a binding site for (2S)-2-hydroxy-3-oxobutyl phosphate. Catalysis depends on His-90, which acts as the Proton donor. Asn-115 provides a ligand contact to 5-amino-6-(D-ribitylamino)uracil. Position 129 (Arg-129) interacts with (2S)-2-hydroxy-3-oxobutyl phosphate.

Belongs to the DMRL synthase family.

It carries out the reaction (2S)-2-hydroxy-3-oxobutyl phosphate + 5-amino-6-(D-ribitylamino)uracil = 6,7-dimethyl-8-(1-D-ribityl)lumazine + phosphate + 2 H2O + H(+). Its pathway is cofactor biosynthesis; riboflavin biosynthesis; riboflavin from 2-hydroxy-3-oxobutyl phosphate and 5-amino-6-(D-ribitylamino)uracil: step 1/2. Functionally, catalyzes the formation of 6,7-dimethyl-8-ribityllumazine by condensation of 5-amino-6-(D-ribitylamino)uracil with 3,4-dihydroxy-2-butanone 4-phosphate. This is the penultimate step in the biosynthesis of riboflavin. This Cupriavidus necator (strain ATCC 17699 / DSM 428 / KCTC 22496 / NCIMB 10442 / H16 / Stanier 337) (Ralstonia eutropha) protein is 6,7-dimethyl-8-ribityllumazine synthase.